The primary structure comprises 559 residues: WD repeat-containing protein JIP5 (559 aa).

9 WD repeats span residues 26–67 (QYSD…NYLQ), 77–116 (ADGK…WKTK), 117–156 (RHKG…VVKK), 162–201 (DNGG…ETNR), 207–247 (NGDD…ESDF), 265–306 (DQED…LEDQ), 313–347 (AKEE…DIKK), 354–394 (RNHS…SEEE), and 428–470 (DSDG…SDDE). Disordered stretches follow at residues 386–500 (SRNE…LIGL) and 515–559 (EESE…FEGL). Residues 391–417 (SEEEDDEESESFSDSDSDSDSDSDSDS) show a composition bias toward acidic residues. Over residues 418-428 (DSDRDRDRDSD) the composition is skewed to basic and acidic residues. Positions 482–494 (DMDDIDEGSDSSE) are enriched in acidic residues. The span at 520-534 (EGEKLQKKRKNEPSK) shows a compositional bias: basic and acidic residues. Over residues 535–544 (KNTKNLKKVK) the composition is skewed to basic residues.

This sequence belongs to the WD repeat WDR55 family.

It is found in the nucleus. The protein resides in the nucleolus. The chain is WD repeat-containing protein JIP5 (JIP5) from Vanderwaltozyma polyspora (strain ATCC 22028 / DSM 70294 / BCRC 21397 / CBS 2163 / NBRC 10782 / NRRL Y-8283 / UCD 57-17) (Kluyveromyces polysporus).